The following is a 29-amino-acid chain: Toxin TdII-3 (29 aa).

One can recognise an LCN-type CS-alpha/beta domain in the interval 1 to 29; the sequence is KDGYLVGTDGCKYGCFTRPGHFCANEECL.

This sequence belongs to the long (4 C-C) scorpion toxin superfamily. Sodium channel inhibitor family. Beta subfamily. As to expression, expressed by the venom gland.

It is found in the secreted. Binds voltage-independently to sodium channels (Nav) and shifts the voltage of activation toward more negative potentials. This toxin is active against mammals and also affects neuromuscular preparations of frog. This is Toxin TdII-3 from Tityus discrepans (Venezuelan scorpion).